Consider the following 322-residue polypeptide: Beta-ketoacyl-[acyl-carrier-protein] synthase III (322 aa).

Residues Cys113 and His249 contribute to the active site. Residues 250–254 (QANLR) form an ACP-binding region. Residue Asn279 is part of the active site.

Belongs to the thiolase-like superfamily. FabH family. In terms of assembly, homodimer.

The protein resides in the cytoplasm. It catalyses the reaction malonyl-[ACP] + acetyl-CoA + H(+) = 3-oxobutanoyl-[ACP] + CO2 + CoA. The protein operates within lipid metabolism; fatty acid biosynthesis. Functionally, catalyzes the condensation reaction of fatty acid synthesis by the addition to an acyl acceptor of two carbons from malonyl-ACP. Catalyzes the first condensation reaction which initiates fatty acid synthesis and may therefore play a role in governing the total rate of fatty acid production. Possesses both acetoacetyl-ACP synthase and acetyl transacylase activities. Its substrate specificity determines the biosynthesis of branched-chain and/or straight-chain of fatty acids. The polypeptide is Beta-ketoacyl-[acyl-carrier-protein] synthase III (Marinobacter nauticus (strain ATCC 700491 / DSM 11845 / VT8) (Marinobacter aquaeolei)).